We begin with the raw amino-acid sequence, 122 residues long: MHELSMADAIVRTVIDAAEKNDAVEVLEVTVEIGQLTLLNPEQIEFMLDVLSEGTILEGARFNLEVVPVEIECECGYEGVVEADELDHFAPVIKCPACGGHEFHVRAGRECNVKNIKIEKKD.

Ni(2+) is bound at residue histidine 2. Cysteine 73, cysteine 75, cysteine 95, and cysteine 98 together coordinate Zn(2+).

This sequence belongs to the HypA/HybF family.

Functionally, involved in the maturation of [NiFe] hydrogenases. Required for nickel insertion into the metal center of the hydrogenase. The sequence is that of Hydrogenase maturation factor HypA from Methanothermobacter thermautotrophicus (strain ATCC 29096 / DSM 1053 / JCM 10044 / NBRC 100330 / Delta H) (Methanobacterium thermoautotrophicum).